The primary structure comprises 364 residues: UDP-N-acetylglucosamine--N-acetylmuramyl-(pentapeptide) pyrophosphoryl-undecaprenol N-acetylglucosamine transferase (364 aa).

UDP-N-acetyl-alpha-D-glucosamine-binding positions include 13–15 (TGG), N125, R165, S192, and Q293.

Belongs to the glycosyltransferase 28 family. MurG subfamily.

Its subcellular location is the cell inner membrane. The catalysed reaction is di-trans,octa-cis-undecaprenyl diphospho-N-acetyl-alpha-D-muramoyl-L-alanyl-D-glutamyl-meso-2,6-diaminopimeloyl-D-alanyl-D-alanine + UDP-N-acetyl-alpha-D-glucosamine = di-trans,octa-cis-undecaprenyl diphospho-[N-acetyl-alpha-D-glucosaminyl-(1-&gt;4)]-N-acetyl-alpha-D-muramoyl-L-alanyl-D-glutamyl-meso-2,6-diaminopimeloyl-D-alanyl-D-alanine + UDP + H(+). Its pathway is cell wall biogenesis; peptidoglycan biosynthesis. Its function is as follows. Cell wall formation. Catalyzes the transfer of a GlcNAc subunit on undecaprenyl-pyrophosphoryl-MurNAc-pentapeptide (lipid intermediate I) to form undecaprenyl-pyrophosphoryl-MurNAc-(pentapeptide)GlcNAc (lipid intermediate II). The polypeptide is UDP-N-acetylglucosamine--N-acetylmuramyl-(pentapeptide) pyrophosphoryl-undecaprenol N-acetylglucosamine transferase (Cereibacter sphaeroides (strain ATCC 17029 / ATH 2.4.9) (Rhodobacter sphaeroides)).